A 273-amino-acid chain; its full sequence is MTKLIIHLVSDSSVQTAKYAANSAFAQFTSIKPKLYHWPMIRNLELLNEVLSKIESKHGLVLYTIADQELRKALTKFCYELKIPCISVIGKIIKEISVFSGIEIEKEQNYNYKFDKTYFDTLNAIDYAIRHDDGQMLNELSEADIILIGPSRTSKTPTSVFLAYNGLKAANIPYVYNCPFPDFIEKDIDLLVVGLVINPNRLIEIREARLNLLQINENKSYTDFNIVQKECLEVRKICDQRNWPVIDVSTRSIEETAALIMRIYYNRKNKYNK.

An ADP-binding site is contributed by 149–156 (GPSRTSKT).

The protein belongs to the pyruvate, phosphate/water dikinase regulatory protein family. PDRP subfamily.

The enzyme catalyses N(tele)-phospho-L-histidyl/L-threonyl-[pyruvate, phosphate dikinase] + ADP = N(tele)-phospho-L-histidyl/O-phospho-L-threonyl-[pyruvate, phosphate dikinase] + AMP + H(+). It catalyses the reaction N(tele)-phospho-L-histidyl/O-phospho-L-threonyl-[pyruvate, phosphate dikinase] + phosphate + H(+) = N(tele)-phospho-L-histidyl/L-threonyl-[pyruvate, phosphate dikinase] + diphosphate. Functionally, bifunctional serine/threonine kinase and phosphorylase involved in the regulation of the pyruvate, phosphate dikinase (PPDK) by catalyzing its phosphorylation/dephosphorylation. This Rickettsia felis (strain ATCC VR-1525 / URRWXCal2) (Rickettsia azadi) protein is Putative pyruvate, phosphate dikinase regulatory protein.